A 171-amino-acid chain; its full sequence is NADH-quinone oxidoreductase subunit B (171 aa).

The [4Fe-4S] cluster site is built by Cys-34, Cys-35, Cys-99, and Cys-128.

Belongs to the complex I 20 kDa subunit family. As to quaternary structure, NDH-1 is composed of 14 different subunits. Subunits NuoB, C, D, E, F, and G constitute the peripheral sector of the complex. [4Fe-4S] cluster serves as cofactor.

It is found in the cell inner membrane. The catalysed reaction is a quinone + NADH + 5 H(+)(in) = a quinol + NAD(+) + 4 H(+)(out). NDH-1 shuttles electrons from NADH, via FMN and iron-sulfur (Fe-S) centers, to quinones in the respiratory chain. The immediate electron acceptor for the enzyme in this species is believed to be ubiquinone. Couples the redox reaction to proton translocation (for every two electrons transferred, four hydrogen ions are translocated across the cytoplasmic membrane), and thus conserves the redox energy in a proton gradient. This chain is NADH-quinone oxidoreductase subunit B, found in Sulfurihydrogenibium sp. (strain YO3AOP1).